Here is a 71-residue protein sequence, read N- to C-terminus: Guanine nucleotide-binding protein G(I)/G(S)/G(O) subunit gamma-2 (71 aa).

A2 carries the N-acetylalanine modification. Cysteine methyl ester is present on C68. A lipid anchor (S-geranylgeranyl cysteine) is attached at C68. Positions 69-71 (AIL) are cleaved as a propeptide — removed in mature form.

It belongs to the G protein gamma family. G proteins are composed of 3 units, alpha, beta and gamma. In this context, interacts with GNB2. The heterodimer formed by GNB1 and GNG2 interacts with ARHGEF5. The heterodimer formed by GNB1 and GNG2 interacts with GRK2. Component of the TAS2R14-GNAI1 complex, consisting of TAS2R14, GNAI1, GNB1 and GNG2. Forms complexes with TAS2R14 and G-proteins; these complexes play a role in the perception of bitterness. Component of the TAS2R14-GNAT3 complex, consisting of TAS2R14, GNAT3, GNB1 and GNG2. Component of the TAS2R14-GNAS2 complex, consisting of TAS2R14, GNAS2, GNB1 and GNG2. In terms of tissue distribution, adrenal gland and brain.

The protein localises to the cell membrane. Its function is as follows. Guanine nucleotide-binding proteins (G proteins) are involved as a modulator or transducer in various transmembrane signaling systems. The beta and gamma chains are required for the GTPase activity, for replacement of GDP by GTP, and for G protein-effector interaction. In Bos taurus (Bovine), this protein is Guanine nucleotide-binding protein G(I)/G(S)/G(O) subunit gamma-2 (GNG2).